Reading from the N-terminus, the 448-residue chain is Adenylosuccinate synthetase (448 aa).

GTP-binding positions include 22–28 (GDEGKGK) and 50–52 (GHT). Asp23 functions as the Proton acceptor in the catalytic mechanism. Mg(2+) contacts are provided by Asp23 and Gly50. Residues 23-26 (DEGK), 48-51 (NAGH), Thr139, Arg153, Gln234, Thr249, and Arg321 each bind IMP. His51 functions as the Proton donor in the catalytic mechanism. 317 to 323 (SVTGRPR) contributes to the substrate binding site. GTP is bound by residues Arg323, 349–351 (KLD), and 431–433 (STG).

It belongs to the adenylosuccinate synthetase family. Homodimer. Requires Mg(2+) as cofactor.

It localises to the cytoplasm. The catalysed reaction is IMP + L-aspartate + GTP = N(6)-(1,2-dicarboxyethyl)-AMP + GDP + phosphate + 2 H(+). It functions in the pathway purine metabolism; AMP biosynthesis via de novo pathway; AMP from IMP: step 1/2. In terms of biological role, plays an important role in the de novo pathway of purine nucleotide biosynthesis. Catalyzes the first committed step in the biosynthesis of AMP from IMP. The protein is Adenylosuccinate synthetase of Burkholderia mallei (strain NCTC 10247).